A 607-amino-acid polypeptide reads, in one-letter code: MNIFTTSILLIFILLLSPILISMSNLIKHINFPLYTTTSIKFSFIISLLPLLMFFHNNMEYMITTWHWVTMNSMELKMSFKTDFFSILFTSVALFVTWSIMQFSSWYMHSDPNINRFIKYLTLFLITMLILTSANNMFQLFIGWEGVGIMSFLLIGWWYGRTDANTAALQAILYNRIGDIGFILAMVWFSLNMNSWELQQIMFSNNNDNLIPLMGLLIAATGKSAQFGLHPWLPSAMEGPTPVSALLHSSTMVVAGIFLLVRFHPLTTNNNFILTTMLCLGALTTLFTAICALTQNDIKKIIAFSTSSQLGLMMVTLGMNQPHLAFLHICTHAFFKAMLFMCSGSIIHSLADEQDIRKMGNITKIMPFTSSCLVIGSLALTGMPFLTGFYSKDLIIEAINTCNTNAWALLITLIATSMTAMYSMRIIYFVTMTKPRFPPLISINENDPDLMNPIKRLAFGSIFAGFVISYNIPPTSIPVLTMPWFLKTTALIISVLGFLIALELNNLTMKLSMNKANPYSSFSTLLGFFPSIIHRITPMKSLNLSLKTSLTLLDLIWLEKTIPKSTSTLHTNMTTLTTNQKGLIKLYFMSFLINIILIIILYSINLE.

Transmembrane regions (helical) follow at residues 3–23 (IFTT…LISM), 35–55 (YTTT…LMFF), 84–104 (FFSI…MQFS), 117–137 (FIKY…ANNM), 140–160 (LFIG…WWYG), 171–191 (AILY…WFSL), 210–230 (LIPL…FGLH), 241–261 (TPVS…FLLV), 272–292 (FILT…AICA), 301–320 (IIAF…LGMN), 324–344 (LAFL…MCSG), 365–385 (IMPF…GMPF), 405–427 (NAWA…MRII), 457–477 (LAFG…PTSI), 482–502 (MPWF…LIAL), and 586–606 (LYFM…SINL).

Belongs to the complex I subunit 5 family. Core subunit of respiratory chain NADH dehydrogenase (Complex I) which is composed of 45 different subunits.

Its subcellular location is the mitochondrion inner membrane. The catalysed reaction is a ubiquinone + NADH + 5 H(+)(in) = a ubiquinol + NAD(+) + 4 H(+)(out). Core subunit of the mitochondrial membrane respiratory chain NADH dehydrogenase (Complex I) which catalyzes electron transfer from NADH through the respiratory chain, using ubiquinone as an electron acceptor. Essential for the catalytic activity and assembly of complex I. This is NADH-ubiquinone oxidoreductase chain 5 (Mtnd5) from Mus musculus (Mouse).